Reading from the N-terminus, the 70-residue chain is uncharacterized protein (70 aa).

An N-terminal signal peptide occupies residues methionine 1–alanine 16.

This is an uncharacterized protein from Orgyia pseudotsugata (Douglas-fir tussock moth).